Consider the following 363-residue polypeptide: Lactose transport ATP-binding protein LacK (363 aa).

One can recognise an ABC transporter domain in the interval 4 to 234 (VRLTDIRKSY…PDNMFVAGFI (231 aa)). An ATP-binding site is contributed by 36–43 (GPSGCGKS).

It belongs to the ABC transporter superfamily.

It localises to the cell inner membrane. Functionally, part of the binding-protein-dependent transport system for lactose. Probably responsible for energy coupling to the transport system. This is Lactose transport ATP-binding protein LacK (lacK) from Rhizobium radiobacter (Agrobacterium tumefaciens).